The chain runs to 34 residues: Jingzhaotoxin F7-10.36 (34 aa).

3 cysteine pairs are disulfide-bonded: cysteine 2–cysteine 17, cysteine 9–cysteine 22, and cysteine 16–cysteine 29.

The protein belongs to the neurotoxin 10 (Hwtx-1) family. 50 (Jztz-F7) subfamily. Expressed by the venom gland.

The protein resides in the secreted. Functionally, probable ion channel inhibitor. This chain is Jingzhaotoxin F7-10.36, found in Chilobrachys guangxiensis (Chinese earth tiger tarantula).